The following is a 343-amino-acid chain: Biotin synthase (343 aa).

One can recognise a Radical SAM core domain in the interval 36-254 (NTIQISTLLS…IAVARIMMPK (219 aa)). The [4Fe-4S] cluster site is built by Cys51, Cys55, and Cys58. [2Fe-2S] cluster-binding residues include Cys95, Cys126, Cys186, and Arg258.

It belongs to the radical SAM superfamily. Biotin synthase family. As to quaternary structure, homodimer. [4Fe-4S] cluster serves as cofactor. [2Fe-2S] cluster is required as a cofactor.

It catalyses the reaction (4R,5S)-dethiobiotin + (sulfur carrier)-SH + 2 reduced [2Fe-2S]-[ferredoxin] + 2 S-adenosyl-L-methionine = (sulfur carrier)-H + biotin + 2 5'-deoxyadenosine + 2 L-methionine + 2 oxidized [2Fe-2S]-[ferredoxin]. Its pathway is cofactor biosynthesis; biotin biosynthesis; biotin from 7,8-diaminononanoate: step 2/2. Catalyzes the conversion of dethiobiotin (DTB) to biotin by the insertion of a sulfur atom into dethiobiotin via a radical-based mechanism. The protein is Biotin synthase of Buchnera aphidicola subsp. Acyrthosiphon pisum (strain 5A).